Consider the following 548-residue polypeptide: Adenine deaminase (548 aa).

The protein belongs to the metallo-dependent hydrolases superfamily. Adenine deaminase family. Mn(2+) serves as cofactor.

The enzyme catalyses adenine + H2O + H(+) = hypoxanthine + NH4(+). This chain is Adenine deaminase, found in Borreliella afzelii (strain PKo) (Borrelia afzelii).